The primary structure comprises 357 residues: MNDKILFIDRDGTLIHEPKDNFQIDSLDKLLLEPYVIPTLIALKNIKFKFIIVTNQNGLGTDLFPKTKFNKPHQFMIQIFKSQGIKFDQILICPHLPEDQCNCRKPKTGLISCWLKNKSLDMPNSYVIGDRDTDIQFAHNIGIQGIKYHQIHFNWKKIHKYLMQNSHRVAHIQRITNETNVDVKIWLNQCDQNKINTGIHFFDHMLEQIAIHAKIRMHIITKGDLHIDDHHTIEDTALSLGEALNQALGDKRGIGRFGFTLPMDESIAQCILDLSGRTYFDYQAEYSLQKIGNFSTHMIEHFFRSLSSKMHCTLHLKVIGNNDHHKAESLFKSFGKSLNQAIYIQHNQIPSSKGILL.

Residues 1–167 (MNDKILFIDR…IHKYLMQNSH (167 aa)) form a histidinol-phosphatase region. D9 (nucleophile) is an active-site residue. Positions 9 and 11 each coordinate Mg(2+). The Proton donor role is filled by D11. C93, H95, C101, and C103 together coordinate Zn(2+). A Mg(2+)-binding site is contributed by D130. The imidazoleglycerol-phosphate dehydratase stretch occupies residues 168-357 (RVAHIQRITN…QIPSSKGILL (190 aa)).

In the N-terminal section; belongs to the histidinol-phosphatase family. It in the C-terminal section; belongs to the imidazoleglycerol-phosphate dehydratase family. Mg(2+) is required as a cofactor. The cofactor is Zn(2+).

The protein resides in the cytoplasm. It catalyses the reaction D-erythro-1-(imidazol-4-yl)glycerol 3-phosphate = 3-(imidazol-4-yl)-2-oxopropyl phosphate + H2O. It carries out the reaction L-histidinol phosphate + H2O = L-histidinol + phosphate. It functions in the pathway amino-acid biosynthesis; L-histidine biosynthesis; L-histidine from 5-phospho-alpha-D-ribose 1-diphosphate: step 6/9. Its pathway is amino-acid biosynthesis; L-histidine biosynthesis; L-histidine from 5-phospho-alpha-D-ribose 1-diphosphate: step 8/9. In Blochmanniella floridana, this protein is Histidine biosynthesis bifunctional protein HisB.